Consider the following 124-residue polypeptide: Small ribosomal subunit protein uS11 (124 aa).

The tract at residues 102-124 (RIGRIEDATPIPHDGTTPKRKNR) is disordered.

It belongs to the universal ribosomal protein uS11 family. In terms of assembly, part of the 30S ribosomal subunit.

Functionally, located on the platform of the 30S subunit. This is Small ribosomal subunit protein uS11 from Methanococcus maripaludis (strain C5 / ATCC BAA-1333).